Here is a 52-residue protein sequence, read N- to C-terminus: ATP synthase protein 8 (52 aa).

The chain crosses the membrane as a helical span at residues 7–23 (MMWFSLFIMFSMTMMLF).

The protein belongs to the ATPase protein 8 family. F-type ATPases have 2 components, CF(1) - the catalytic core - and CF(0) - the membrane proton channel.

The protein localises to the mitochondrion membrane. In terms of biological role, mitochondrial membrane ATP synthase (F(1)F(0) ATP synthase or Complex V) produces ATP from ADP in the presence of a proton gradient across the membrane which is generated by electron transport complexes of the respiratory chain. F-type ATPases consist of two structural domains, F(1) - containing the extramembraneous catalytic core and F(0) - containing the membrane proton channel, linked together by a central stalk and a peripheral stalk. During catalysis, ATP synthesis in the catalytic domain of F(1) is coupled via a rotary mechanism of the central stalk subunits to proton translocation. Part of the complex F(0) domain. Minor subunit located with subunit a in the membrane. This Locusta migratoria (Migratory locust) protein is ATP synthase protein 8 (MT-ATP8).